The chain runs to 92 residues: Small ribosomal subunit protein uS19c (92 aa).

It belongs to the universal ribosomal protein uS19 family.

The protein localises to the plastid. It localises to the chloroplast. Its function is as follows. Protein S19 forms a complex with S13 that binds strongly to the 16S ribosomal RNA. The polypeptide is Small ribosomal subunit protein uS19c (Adiantum capillus-veneris (Maidenhair fern)).